The following is a 475-amino-acid chain: Equilibrative nucleoside transporter 3 (475 aa).

The Cytoplasmic segment spans residues 1 to 51 (MAFASEDIAYHSSNAVYRVPSNRHEADQEALLGKPLDYPAPGLQRPEDRFN). Position 21 is a phosphoserine (S21). The short motif at 31–32 (LL) is the Dileucine internalization motif element. The chain crosses the membrane as a helical span at residues 52–72 (GAYIIFFCLGIGGLLPWNFFV). Residues 73–105 (TAKEYWAFKLRNCSSPASGKDPEDADILNYFES) are Extracellular-facing. N84 is a glycosylation site (N-linked (GlcNAc...) asparagine). Residues 106–126 (YLAVASTVPSLLFLVANFLLV) form a helical membrane-spanning segment. Topologically, residues 127-132 (NRIRVH) are cytoplasmic. A helical transmembrane segment spans residues 133 to 153 (VRVLASLSVSLAIFVVMAVLV). Residues 154 to 162 (RVDTSSWTR) lie on the Extracellular side of the membrane. The helical transmembrane segment at 163–183 (GFFSIAMACMAIISSSSTIFN) threads the bilayer. The Cytoplasmic segment spans residues 184–199 (SSVYGLTGSFPMRNAQ). A helical transmembrane segment spans residues 200 to 220 (ALISGGAMGGTVSAVASLVDL). The Extracellular segment spans residues 221–230 (AASSDVRDSA). A helical membrane pass occupies residues 231-251 (LAFFLTAAVFLGLCVGLYLLL). Topologically, residues 252–305 (PQLEYARYYMRPVVPIHVFSSEDSPPRDAPSTSSVAPASRAVHTPPLGPILKKT) are cytoplasmic. Residues 272 to 291 (SEDSPPRDAPSTSSVAPASR) are disordered. A helical membrane pass occupies residues 306–326 (AGLGFCAVFLYFITALIFPAI). The Extracellular portion of the chain corresponds to 327-340 (STNIQPMHKGTGSP). Residues 341 to 361 (WTSKFYVPLTVFLLFNFADLC) form a helical membrane-spanning segment. The Cytoplasmic segment spans residues 362-377 (GRQVTAWIQVPGPRSK). A helical transmembrane segment spans residues 378 to 398 (LLPILAVSRVCLVPLFLLCNY). Topologically, residues 399–414 (QPRSHLTLVLFQSDIY) are extracellular. A helical membrane pass occupies residues 415-437 (PILFTCLLGLSNGYLSTLVLMYG). Residues 438–450 (PKIVPRELAEATS) lie on the Cytoplasmic side of the membrane. The chain crosses the membrane as a helical span at residues 451–471 (VVMLFYMSLGLMLGSACAALL). At 472 to 475 (EHFI) the chain is on the extracellular side.

This sequence belongs to the SLC29A/ENT transporter (TC 2.A.57) family. Widely expressed. Highest levels in heart and liver (at protein level).

The protein localises to the lysosome membrane. It localises to the late endosome membrane. It is found in the mitochondrion membrane. The protein resides in the cell membrane. It catalyses the reaction adenosine(in) = adenosine(out). It carries out the reaction guanosine(in) = guanosine(out). The catalysed reaction is inosine(in) = inosine(out). The enzyme catalyses uridine(out) = uridine(in). It catalyses the reaction cytidine(in) = cytidine(out). It carries out the reaction thymidine(in) = thymidine(out). The catalysed reaction is 2'-deoxyadenosine(in) = 2'-deoxyadenosine(out). The enzyme catalyses 2'-deoxycytidine(in) = 2'-deoxycytidine(out). It catalyses the reaction guanine(out) = guanine(in). It carries out the reaction uracil(in) = uracil(out). The catalysed reaction is (R)-noradrenaline(out) = (R)-noradrenaline(in). The enzyme catalyses dopamine(out) = dopamine(in). It catalyses the reaction serotonin(out) = serotonin(in). It carries out the reaction tyramine(in) = tyramine(out). The catalysed reaction is ATP(in) = ATP(out). Functionally, uniporter that mediates the facilitative transport of nucleoside across lysosomal and mitochondrial membranes. Functions as a non-electrogenic Na(+)-independent transporter. Substrate transport is pH-dependent and enhanced under acidic condition, probably reflecting the location of the transporter in acidic intracellular compartments. Proton is not a cotransporting ion but most likely change the ionization state of the transporter which dictates transport-permissible/impermissible conformation for nucleoside translocation. May direct the nucleoside transport from lysosomes to cytosol or cytosol to mitochondria to facilitate the fundamental function of salvage synthesis of nucleic acids. Involved in the transport of nucleosides (adenosine, guanosine, uridine, thymidine, cytidine and inosine) and deoxynucleosides (deoxyadenosine, deoxycytidine). Also mediates transport of purine nucleobases (adenine, guanine) and pyrimidine nucleobases (uracil). Also able to transport monoamine neurotransmitters dopamine, serotonin, noradrenaline and tyramine. Capable of transporting ATP. Mediates nucleoside export from lysosomes in macrophages, which regulates macrophage functions and numbers. The sequence is that of Equilibrative nucleoside transporter 3 from Rattus norvegicus (Rat).